The primary structure comprises 77 residues: Serine protease inhibitor 3 (77 aa).

Positions 1 to 17 (MMFTPLIVLTLLVLATA) are cleaved as a signal peptide. Disulfide bonds link C21–C53, C30–C48, C33–C44, and C55–C68. Residues 21 to 74 (CGPNEQWSGCPKCELQSGESDKPCATICGEPKCYCSPDKYRRIPDGRCIRKIQC) form the TIL domain.

Its subcellular location is the secreted. Functionally, defends the organism against the host's proteinases. This Anisakis simplex (Herring worm) protein is Serine protease inhibitor 3.